The sequence spans 285 residues: MKYIGAHVSAAGGLANAPARAAEIVATAFALFTKNQRQWRAAPLTPQVIDDFKIACEKYHFSAAQILPHDSYLINLGHPVSEALEKSRDAFLDEMQRCEQLGLTLLNFHPGSHLMQIAQEDCLARIAESINIALAQTEGVTAVIENTAGQGSNLGFEFEQLAAIIDGVEDKSRVGVCIDTCHAFAAGYDLRTPEACEKTFAEFGKIVGFQYLRGMHLNDAKSAFGSRVDRHHSLGEGNIGHDAFRWIMQDGRFDGIPLILETINPDIWAEEIAWLKAQQIAEAMA.

Positions 69, 109, 145, 179, 182, 216, 229, 231, and 261 each coordinate Zn(2+).

The protein belongs to the AP endonuclease 2 family. Requires Zn(2+) as cofactor.

The enzyme catalyses Endonucleolytic cleavage to 5'-phosphooligonucleotide end-products.. Endonuclease IV plays a role in DNA repair. It cleaves phosphodiester bonds at apurinic or apyrimidinic (AP) sites, generating a 3'-hydroxyl group and a 5'-terminal sugar phosphate. The chain is Probable endonuclease 4 from Salmonella paratyphi C (strain RKS4594).